Reading from the N-terminus, the 1224-residue chain is Coatomer subunit alpha (1224 aa).

WD repeat units follow at residues 7–37 (TKSARVKGLSFHPKRPWILTSLHNGVIQLWD), 49–79 (EHDGPVRGIDFHKQQPLFVSGGDDYKIKVWN), 91–121 (GHLDYIRTTFFHHEYPWILSASDDQTIRVWN), and 133–163 (GHNHYVMCAQFHPSEDLVVSASLDQTVRVWD). Ser173 is subject to Phosphoserine. Residue Thr185 is modified to Phosphothreonine. WD repeat units follow at residues 203–233 (GHDRGVNWAAFHPTMPLIVSGADDRQVKIWR) and 247–277 (GHYNNVSCAVFHPRQELILSNSEDKSIRVWD). Residue Thr591 is modified to Phosphothreonine. Arg965 is modified (omega-N-methylarginine). Residue Ser1193 is modified to Phosphoserine.

Oligomeric complex that consists of at least the alpha, beta, beta', gamma, delta, epsilon and zeta subunits. Interacts with SCYL1. Interacts with JAGN1. Interacts with TMEM41B. Interacts with SVEP1. Probably interacts with PEX11A.

It is found in the cytoplasm. Its subcellular location is the golgi apparatus membrane. The protein localises to the cytoplasmic vesicle. The protein resides in the COPI-coated vesicle membrane. It localises to the secreted. Its function is as follows. The coatomer is a cytosolic protein complex that binds to dilysine motifs and reversibly associates with Golgi non-clathrin-coated vesicles, which further mediate biosynthetic protein transport from the ER, via the Golgi up to the trans Golgi network. Coatomer complex is required for budding from Golgi membranes, and is essential for the retrograde Golgi-to-ER transport of dilysine-tagged proteins. In mammals, the coatomer can only be recruited by membranes associated to ADP-ribosylation factors (ARFs), which are small GTP-binding proteins; the complex also influences the Golgi structural integrity, as well as the processing, activity, and endocytic recycling of LDL receptors. Xenin stimulates exocrine pancreatic secretion. It inhibits pentagastrin-stimulated secretion of acid, to induce exocrine pancreatic secretion and to affect small and large intestinal motility. In the gut, xenin interacts with the neurotensin receptor. The protein is Coatomer subunit alpha (COPA) of Bos taurus (Bovine).